Here is a 237-residue protein sequence, read N- to C-terminus: MAKLTKRQKAQVGKIETTKLYAVDDAIALIKEFAVAKFDESIDVAVQLGVDAKKSDQVVRGAVVMPNGTGKTKRVAVFTQGAKADEARAAGADIVGMDDLAAEVKAGNINFDVVIASPDAMRVVGQLGQILGPRGLMPNPKVGTVTADVATAVRNAKAGQVQFRVDKGGIIHGTIGRRSFDTDKLKGNLQALLDALNKAKPASSKGVYLRKVAVSSTMGVGVRVEVASITAGLAAQS.

Belongs to the universal ribosomal protein uL1 family. As to quaternary structure, part of the 50S ribosomal subunit.

Functionally, binds directly to 23S rRNA. The L1 stalk is quite mobile in the ribosome, and is involved in E site tRNA release. Protein L1 is also a translational repressor protein, it controls the translation of the L11 operon by binding to its mRNA. The sequence is that of Large ribosomal subunit protein uL1 from Leptothrix cholodnii (strain ATCC 51168 / LMG 8142 / SP-6) (Leptothrix discophora (strain SP-6)).